A 242-amino-acid chain; its full sequence is ATP synthase subunit a (242 aa).

5 helical membrane passes run 21–41 (LASV…AIVC), 83–103 (AVTL…FAIV), 118–137 (ATVT…YYGI), 175–195 (LYGN…LFFE), and 198–218 (AWGW…SIFV).

It belongs to the ATPase A chain family. F-type ATPases have 2 components, CF(1) - the catalytic core - and CF(0) - the membrane proton channel. CF(1) has five subunits: alpha(3), beta(3), gamma(1), delta(1), epsilon(1). CF(0) has three main subunits: a(1), b(2) and c(9-12). The alpha and beta chains form an alternating ring which encloses part of the gamma chain. CF(1) is attached to CF(0) by a central stalk formed by the gamma and epsilon chains, while a peripheral stalk is formed by the delta and b chains.

It is found in the cell membrane. Its function is as follows. Key component of the proton channel; it plays a direct role in the translocation of protons across the membrane. The sequence is that of ATP synthase subunit a from Staphylococcus epidermidis (strain ATCC 35984 / DSM 28319 / BCRC 17069 / CCUG 31568 / BM 3577 / RP62A).